The following is a 115-amino-acid chain: Large ribosomal subunit protein uL24 (115 aa).

This sequence belongs to the universal ribosomal protein uL24 family. In terms of assembly, part of the 50S ribosomal subunit.

One of two assembly initiator proteins, it binds directly to the 5'-end of the 23S rRNA, where it nucleates assembly of the 50S subunit. Its function is as follows. One of the proteins that surrounds the polypeptide exit tunnel on the outside of the subunit. This chain is Large ribosomal subunit protein uL24, found in Amoebophilus asiaticus (strain 5a2).